Reading from the N-terminus, the 542-residue chain is GMP synthase [glutamine-hydrolyzing] (542 aa).

In terms of domain architecture, Glutamine amidotransferase type-1 spans 28–218; that stretch reads IIVILDFGSQ…VYHICHCEPT (191 aa). Catalysis depends on Cys-105, which acts as the Nucleophile. Active-site residues include His-192 and Glu-194. A GMPS ATP-PPase domain is found at 219 to 417; sequence WTTAAFIEES…IGLPEEIVRR (199 aa). 246–252 provides a ligand contact to ATP; the sequence is SGGVDSS.

Homodimer.

It catalyses the reaction XMP + L-glutamine + ATP + H2O = GMP + L-glutamate + AMP + diphosphate + 2 H(+). It participates in purine metabolism; GMP biosynthesis; GMP from XMP (L-Gln route): step 1/1. Its function is as follows. Catalyzes the synthesis of GMP from XMP. The sequence is that of GMP synthase [glutamine-hydrolyzing] (guaA) from Synechocystis sp. (strain ATCC 27184 / PCC 6803 / Kazusa).